A 910-amino-acid chain; its full sequence is Bifunctional glucose-6-phosphate 1-dehydrogenase/6-phosphogluconolactonase (910 aa).

The interval 1 to 170 (MDYENFVKSA…DFHIASLFPN (170 aa)) is 6-phosphogluconolactonase. Residues 171-276 (IFYNIYMNNY…PATYLIDTSC (106 aa)) form a linker region. The tract at residues 277–910 (TNENVNINNN…FYEDDLLDIN (634 aa)) is glucose-6-phosphate 1-dehydrogenase. NADP(+) is bound by residues 345–352 (GCSGDLAK), Arg379, and Lys548. D-glucose 6-phosphate contacts are provided by residues Lys548, 578–582 (HYLGK), Glu616, and Asp635. Residue His640 is the Proton acceptor of the active site. The disordered stretch occupies residues 689–711 (ENFKEDENNDDESKKNHSYHDDP). Lys742 contributes to the NADP(+) binding site. A D-glucose 6-phosphate-binding site is contributed by Lys745. Arg755 is a binding site for NADP(+). Gln779 serves as a coordination point for D-glucose 6-phosphate. Position 785–787 (785–787 (YLK)) interacts with NADP(+).

The protein in the N-terminal section; belongs to the glucosamine/galactosamine-6-phosphate isomerase family. 6-phosphogluconolactonase subfamily. In the C-terminal section; belongs to the glucose-6-phosphate dehydrogenase family. In terms of assembly, homotetramer.

The catalysed reaction is 6-phospho-D-glucono-1,5-lactone + H2O = 6-phospho-D-gluconate + H(+). It carries out the reaction D-glucose 6-phosphate + NADP(+) = 6-phospho-D-glucono-1,5-lactone + NADPH + H(+). It participates in carbohydrate degradation; pentose phosphate pathway; D-ribulose 5-phosphate from D-glucose 6-phosphate (oxidative stage): step 1/3. Its pathway is carbohydrate degradation; pentose phosphate pathway; D-ribulose 5-phosphate from D-glucose 6-phosphate (oxidative stage): step 2/3. With respect to regulation, G6PD activity is inhibited by glucosamine-6-phosphate, NADPH, and 4-(4-bromophenyl)-7-(3,4-dimethoxyphenyl)-4,6,7,8-tetrahydroquinoline-2,5(1 H,3H)-dione. G6PD and 6PGL activities can be reversibly inhibited by S-glutathionylation (in vitro). Functionally, bifunctional enzyme which catalyzes the first two steps of the oxidative pentose-phosphate pathway, which represents a route for the dissimilation of carbohydrates besides glycolysis. The main function of this enzyme is to provide reducing power (NADPH) and pentose phosphates for fatty acid and nucleic acid synthesis. The protein is Bifunctional glucose-6-phosphate 1-dehydrogenase/6-phosphogluconolactonase of Plasmodium falciparum (isolate 3D7).